The following is a 118-amino-acid chain: Protein LH1 (118 aa).

This chain is Protein LH1, found in Snake adenovirus serotype 1 (SnAdV-1).